We begin with the raw amino-acid sequence, 159 residues long: SsrA-binding protein (159 aa).

The segment at Lys134–Ala159 is disordered.

The protein belongs to the SmpB family.

It is found in the cytoplasm. Required for rescue of stalled ribosomes mediated by trans-translation. Binds to transfer-messenger RNA (tmRNA), required for stable association of tmRNA with ribosomes. tmRNA and SmpB together mimic tRNA shape, replacing the anticodon stem-loop with SmpB. tmRNA is encoded by the ssrA gene; the 2 termini fold to resemble tRNA(Ala) and it encodes a 'tag peptide', a short internal open reading frame. During trans-translation Ala-aminoacylated tmRNA acts like a tRNA, entering the A-site of stalled ribosomes, displacing the stalled mRNA. The ribosome then switches to translate the ORF on the tmRNA; the nascent peptide is terminated with the 'tag peptide' encoded by the tmRNA and targeted for degradation. The ribosome is freed to recommence translation, which seems to be the essential function of trans-translation. The protein is SsrA-binding protein of Marinomonas sp. (strain MWYL1).